The following is a 202-amino-acid chain: Peptidyl-tRNA hydrolase (202 aa).

Tyrosine 22 contacts tRNA. Histidine 27 functions as the Proton acceptor in the catalytic mechanism. TRNA-binding residues include phenylalanine 69, asparagine 71, and asparagine 117.

The protein belongs to the PTH family. In terms of assembly, monomer.

The protein localises to the cytoplasm. It carries out the reaction an N-acyl-L-alpha-aminoacyl-tRNA + H2O = an N-acyl-L-amino acid + a tRNA + H(+). Functionally, hydrolyzes ribosome-free peptidyl-tRNAs (with 1 or more amino acids incorporated), which drop off the ribosome during protein synthesis, or as a result of ribosome stalling. Catalyzes the release of premature peptidyl moieties from peptidyl-tRNA molecules trapped in stalled 50S ribosomal subunits, and thus maintains levels of free tRNAs and 50S ribosomes. In Thiobacillus denitrificans (strain ATCC 25259 / T1), this protein is Peptidyl-tRNA hydrolase.